Consider the following 593-residue polypeptide: NADH-quinone oxidoreductase subunit C/D (593 aa).

The segment at 1-184 (MTADTAVSIP…DPFSLTLAKQ (184 aa)) is NADH dehydrogenase I subunit C. Positions 208–593 (DYMFLNLGPN…IDFVMADVDR (386 aa)) are NADH dehydrogenase I subunit D.

In the N-terminal section; belongs to the complex I 30 kDa subunit family. The protein in the C-terminal section; belongs to the complex I 49 kDa subunit family. As to quaternary structure, NDH-1 is composed of 13 different subunits. Subunits NuoB, CD, E, F, and G constitute the peripheral sector of the complex.

It localises to the cell inner membrane. The enzyme catalyses a quinone + NADH + 5 H(+)(in) = a quinol + NAD(+) + 4 H(+)(out). In terms of biological role, NDH-1 shuttles electrons from NADH, via FMN and iron-sulfur (Fe-S) centers, to quinones in the respiratory chain. The immediate electron acceptor for the enzyme in this species is believed to be ubiquinone. Couples the redox reaction to proton translocation (for every two electrons transferred, four hydrogen ions are translocated across the cytoplasmic membrane), and thus conserves the redox energy in a proton gradient. This Ectopseudomonas mendocina (strain ymp) (Pseudomonas mendocina) protein is NADH-quinone oxidoreductase subunit C/D.